The sequence spans 393 residues: S-adenosylmethionine synthase (393 aa).

Position 16 (H16) interacts with ATP. D18 serves as a coordination point for Mg(2+). Residue E44 participates in K(+) binding. L-methionine is bound by residues E57 and Q100. Positions Q100–H110 are flexible loop. Residues D167 to K169, R238 to F239, D247, R253 to K254, A270, and K274 contribute to the ATP site. D247 contributes to the L-methionine binding site. K278 is a binding site for L-methionine.

Belongs to the AdoMet synthase family. In terms of assembly, homotetramer; dimer of dimers. The cofactor is Mg(2+). K(+) serves as cofactor.

Its subcellular location is the cytoplasm. The catalysed reaction is L-methionine + ATP + H2O = S-adenosyl-L-methionine + phosphate + diphosphate. The protein operates within amino-acid biosynthesis; S-adenosyl-L-methionine biosynthesis; S-adenosyl-L-methionine from L-methionine: step 1/1. Functionally, catalyzes the formation of S-adenosylmethionine (AdoMet) from methionine and ATP. The overall synthetic reaction is composed of two sequential steps, AdoMet formation and the subsequent tripolyphosphate hydrolysis which occurs prior to release of AdoMet from the enzyme. The protein is S-adenosylmethionine synthase of Acidovorax ebreus (strain TPSY) (Diaphorobacter sp. (strain TPSY)).